We begin with the raw amino-acid sequence, 325 residues long: E3 ubiquitin-protein ligase SIAH2 (325 aa).

Residues 1 to 15 (MSRPSSTGPSANKPC) are compositionally biased toward polar residues. The disordered stretch occupies residues 1-43 (MSRPSSTGPSANKPCSKQPPPPQTPHAPSPAAPPAAATISAAG). Phosphoserine is present on Ser-6. Ser-16 is modified (phosphoserine; by DYRK2). Positions 17 to 33 (KQPPPPQTPHAPSPAAP) are enriched in pro residues. Thr-24 is subject to Phosphothreonine; by MAPK14. Position 29 is a phosphoserine; by DYRK2 and MAPK14 (Ser-29). The span at 34 to 43 (PAAATISAAG) shows a compositional bias: low complexity. Ser-69 is subject to Phosphoserine; by DYRK2. The segment at 81 to 116 (CPVCFDYVLPPILQCQAGHLVCNQCRQKLSCCPTCR) adopts an RING-type zinc-finger fold. Phosphothreonine; by DYRK2 is present on Thr-120. The SBD stretch occupies residues 131-323 (VASAVLFPCK…LGINVTISTC (193 aa)). The SIAH-type zinc-finger motif lies at 134–194 (AVLFPCKYAT…VMSHLMHAHK (61 aa)). Residues Cys-139, Cys-146, His-158, Cys-162, Cys-169, Cys-176, His-188, and His-193 each coordinate Zn(2+).

Belongs to the SINA (Seven in absentia) family. Homodimer. Interacts with UBE2E2. Interacts with VAV1, without mediating its ubiquitin-mediated degradation. Interacts with CACYBP/SIP. Probable component of some large E3 complex possibly composed of UBE2D1, SIAH2, CACYBP/SIP, SKP1, APC and TBL1X. Interacts with UBE2I. Interacts with PEG10, which may inhibit its activity. Interacts with EGLN2 and SNCAIP. Interacts with DYRK2. Interacts with PEG3. Interacts with NR1D1 and NR1D2. Interacts with DCC. Interacts with AXIN1. In terms of processing, phosphorylated at Ser-29 by DYRK2; this increases the ubiquitin ligase activity and promotes degradation of EGLN3. Phosphorylated at Thr-24 and Ser-29 by MAPK14, which mediates the degradation by the proteasome of EGLN3. Widely expressed at low level in embryos and adults. Expressed in a specific population of germ cells within both the mouse ovary and testis. Absent in primordial oocytes but expressed in all growing oocytes, coincident with their recruitment from the pool of quiescent cells. Its level of expression increases as the oocytes mature. Expressed in Graafian follicles and in fertilized zygotes up until the two cell stage, a time of extensive maternal transcript degradation and zygotic gene activation. Expressed in the testis from postmeiotic spermatids.

Its subcellular location is the cytoplasm. The protein resides in the nucleus. It carries out the reaction S-ubiquitinyl-[E2 ubiquitin-conjugating enzyme]-L-cysteine + [acceptor protein]-L-lysine = [E2 ubiquitin-conjugating enzyme]-L-cysteine + N(6)-ubiquitinyl-[acceptor protein]-L-lysine.. It participates in protein modification; protein ubiquitination. Functionally, E3 ubiquitin-protein ligase that mediates ubiquitination and subsequent proteasomal degradation of target proteins. E3 ubiquitin ligases accept ubiquitin from an E2 ubiquitin-conjugating enzyme in the form of a thioester and then directly transfers the ubiquitin to targeted substrates. Mediates E3 ubiquitin ligase activity either through direct binding to substrates or by functioning as the essential RING domain subunit of larger E3 complexes. Mediates ubiquitination and proteasomal degradation of DYRK2 in response to hypoxia. Promotes monoubiquitination of SNCA. Triggers the ubiquitin-mediated degradation of many substrates, including proteins involved in transcription regulation (GPS2, POU2AF1, PML, NCOR1), a cell surface receptor (DCC), an antiapoptotic protein (BAG1), and a protein involved in synaptic vesicle function in neurons (SYP). It is thereby involved in apoptosis, tumor suppression, cell cycle, transcription and signaling processes. Has some overlapping function with SIAH1. Triggers the ubiquitin-mediated degradation of TRAF2, whereas SIAH1 does not. Regulates cellular clock function via ubiquitination of the circadian transcriptional repressors NR1D1 and NR1D2 leading to their proteasomal degradation. Plays an important role in mediating the rhythmic degradation/clearance of NR1D1 and NR1D2 contributing to their circadian profile of protein abundance. Mediates ubiquitination and degradation of EGLN2 and EGLN3 in response to the unfolded protein response (UPR), leading to their degradation and subsequent stabilization of ATF4. Also part of the Wnt signaling pathway in which it mediates the Wnt-induced ubiquitin-mediated proteasomal degradation of AXIN1. The polypeptide is E3 ubiquitin-protein ligase SIAH2 (Siah2) (Mus musculus (Mouse)).